Consider the following 292-residue polypeptide: Bifunctional protein FolD (292 aa).

Residues 165-167 (GRS), S190, and T231 contribute to the NADP(+) site.

It belongs to the tetrahydrofolate dehydrogenase/cyclohydrolase family. As to quaternary structure, homodimer.

The enzyme catalyses (6R)-5,10-methylene-5,6,7,8-tetrahydrofolate + NADP(+) = (6R)-5,10-methenyltetrahydrofolate + NADPH. It catalyses the reaction (6R)-5,10-methenyltetrahydrofolate + H2O = (6R)-10-formyltetrahydrofolate + H(+). It functions in the pathway one-carbon metabolism; tetrahydrofolate interconversion. Functionally, catalyzes the oxidation of 5,10-methylenetetrahydrofolate to 5,10-methenyltetrahydrofolate and then the hydrolysis of 5,10-methenyltetrahydrofolate to 10-formyltetrahydrofolate. The polypeptide is Bifunctional protein FolD (Arthrobacter globiformis).